The sequence spans 205 residues: Glycerol-3-phosphate acyltransferase (205 aa).

The next 5 membrane-spanning stretches (helical) occupy residues 4–24 (IAPGMILFAYLCGSISSAILV), 56–76 (VAVLIFDVLKGMLPVWGAYAL), 81–101 (FWLGLIAIAACLGHIWPVFFG), 112–132 (FGAIAPIGWDLTGVMAGTWLL), and 138–158 (GYSSLGAIVSALIAPFYVWWF).

The protein belongs to the PlsY family. Probably interacts with PlsX.

It localises to the cell inner membrane. It catalyses the reaction an acyl phosphate + sn-glycerol 3-phosphate = a 1-acyl-sn-glycero-3-phosphate + phosphate. The protein operates within lipid metabolism; phospholipid metabolism. Its function is as follows. Catalyzes the transfer of an acyl group from acyl-phosphate (acyl-PO(4)) to glycerol-3-phosphate (G3P) to form lysophosphatidic acid (LPA). This enzyme utilizes acyl-phosphate as fatty acyl donor, but not acyl-CoA or acyl-ACP. This chain is Glycerol-3-phosphate acyltransferase, found in Citrobacter koseri (strain ATCC BAA-895 / CDC 4225-83 / SGSC4696).